The primary structure comprises 557 residues: Jerky protein (557 aa).

One can recognise an HTH psq-type domain in the interval 11–62; that stretch reads KGEKRKRVVLTLKEKIDICTRLERGESRKALMQEYNVGMSTLYDIKAHKAQL. DNA-binding regions (H-T-H motif) lie at residues 38–58 and 110–142; these read RKALMQEYNVGMSTLYDIKAH and PMLIEKAKDFYKQMRLTEPCVFSGGWLWRFKAR. The region spanning 77–149 is the HTH CENPB-type domain; sequence QRRTLHTPKL…KARHGIKKLD (73 aa). The DDE-1 domain maps to 213–382; the sequence is KDRLTVLMCA…VPSQVFQRAW (170 aa).

Belongs to the tigger transposable element derived protein family. As to expression, brain; highest in the temporal and brainstem regions.

Its subcellular location is the nucleus. In terms of biological role, may bind DNA. This chain is Jerky protein, found in Mus musculus (Mouse).